The chain runs to 329 residues: Ferredoxin--NADP reductase 2 (329 aa).

Residues Thr18, Glu37, Gln45, Tyr50, Val90, Phe124, Asp285, and Ser326 each coordinate FAD.

It belongs to the ferredoxin--NADP reductase type 2 family. In terms of assembly, homodimer. The cofactor is FAD.

The catalysed reaction is 2 reduced [2Fe-2S]-[ferredoxin] + NADP(+) + H(+) = 2 oxidized [2Fe-2S]-[ferredoxin] + NADPH. This Bacillus mycoides (strain KBAB4) (Bacillus weihenstephanensis) protein is Ferredoxin--NADP reductase 2.